We begin with the raw amino-acid sequence, 282 residues long: 5'-adenylylsulfate reductase-like 2 (282 aa).

Positions 1–19 are cleaved as a signal peptide; sequence MRWWPALPLLLLAVAVAGA. The 140-residue stretch at 20–159 folds into the Thioredoxin domain; the sequence is GDAAPVCTRP…LAAFYNDVSG (140 aa). Asparagine 134 carries N-linked (GlcNAc...) asparagine glycosylation. The helical transmembrane segment at 205 to 225 threads the bilayer; the sequence is AASFVILRLLYLFYPKITAFV.

Its subcellular location is the membrane. The chain is 5'-adenylylsulfate reductase-like 2 (APRL2) from Oryza sativa subsp. japonica (Rice).